The following is a 672-amino-acid chain: Glycerophosphocholine phosphodiesterase GPCPD1 (672 aa).

One can recognise a CBM20 domain in the interval 1–115 (MTPSQVAFEI…IIIDDGQFGI (115 aa)). Residues lysine 70 and 88–89 (HK) contribute to the substrate site. Phosphoserine is present on residues serine 175 and serine 424. The GP-PDE domain maps to 318 to 618 (PLDVGHRGAG…DRIYDWMPEQ (301 aa)). Tyrosine 608 is modified (phosphotyrosine).

The protein belongs to the glycerophosphoryl diester phosphodiesterase family. In terms of tissue distribution, widely expressed, with highest expression in spinal chord.

It localises to the cytoplasm. Its subcellular location is the cytosol. The catalysed reaction is sn-glycerol 3-phosphocholine + H2O = sn-glycerol 3-phosphate + choline + H(+). May be involved in the negative regulation of skeletal muscle differentiation, independently of its glycerophosphocholine phosphodiesterase activity. The sequence is that of Glycerophosphocholine phosphodiesterase GPCPD1 (GPCPD1) from Homo sapiens (Human).